The chain runs to 240 residues: Large ribosomal subunit protein bL25 (240 aa).

The interval 1–24 (MATVMEFKATARPKSGKGAARAER) is disordered.

It belongs to the bacterial ribosomal protein bL25 family. CTC subfamily. As to quaternary structure, part of the 50S ribosomal subunit; part of the 5S rRNA/L5/L18/L25 subcomplex. Contacts the 5S rRNA. Binds to the 5S rRNA independently of L5 and L18.

This is one of the proteins that binds to the 5S RNA in the ribosome where it forms part of the central protuberance. This Rhodopseudomonas palustris (strain HaA2) protein is Large ribosomal subunit protein bL25.